A 292-amino-acid polypeptide reads, in one-letter code: 4-hydroxy-tetrahydrodipicolinate synthase (292 aa).

Pyruvate is bound at residue threonine 45. Tyrosine 133 functions as the Proton donor/acceptor in the catalytic mechanism. Lysine 161 (schiff-base intermediate with substrate) is an active-site residue. Isoleucine 203 provides a ligand contact to pyruvate.

This sequence belongs to the DapA family. As to quaternary structure, homotetramer; dimer of dimers.

The protein localises to the cytoplasm. It carries out the reaction L-aspartate 4-semialdehyde + pyruvate = (2S,4S)-4-hydroxy-2,3,4,5-tetrahydrodipicolinate + H2O + H(+). Its pathway is amino-acid biosynthesis; L-lysine biosynthesis via DAP pathway; (S)-tetrahydrodipicolinate from L-aspartate: step 3/4. Catalyzes the condensation of (S)-aspartate-beta-semialdehyde [(S)-ASA] and pyruvate to 4-hydroxy-tetrahydrodipicolinate (HTPA). The polypeptide is 4-hydroxy-tetrahydrodipicolinate synthase (Nitrosomonas europaea (strain ATCC 19718 / CIP 103999 / KCTC 2705 / NBRC 14298)).